The following is a 427-amino-acid chain: Transcobalamin-2 (427 aa).

The first 18 residues, 1-18 (MRHLGAFLFLLGVLGALT), serve as a signal peptide directing secretion. Cystine bridges form between Cys21/Cys267, Cys83/Cys96, Cys116/Cys309, and Cys165/Cys205. Residues Gln104, 152–156 (TSYYQ), His190, 190–194 (HHSVD), Asn242, Ser245, Gln291, and 395–397 (WQL) contribute to the cob(II)alamin site.

It belongs to the eukaryotic cobalamin transport proteins family. In terms of assembly, interacts with CD320 (via LDL-receptor class A domains).

Its subcellular location is the secreted. Its function is as follows. Primary vitamin B12-binding and transport protein. Delivers cobalamin to cells. This is Transcobalamin-2 (TCN2) from Homo sapiens (Human).